A 255-amino-acid polypeptide reads, in one-letter code: MSSSPPQHDLGHCDGDDFLARYTLHSRAEILFQLRALQKRKVLVNLDLSESRQIIVTSVLAVNEADNTVVLDSARGDALNNELMSGKGAEFVAQLDGVSISFSIGAVSLCEYEKLPALRIPVPTSLIRLQRREHFRVPLPIANPVKCIVPSPWEESKEQITTHLVDIGCGGVALTDIGARLGTESGRLLRGCRLLLPETDVVVTTLEIRNSAQIRLQNGSFQTRLGCKFVDLPNDMAAHLQRFVMNIERARRNRL.

Positions Gln130–Met245 constitute a PilZ domain.

This sequence belongs to the YcgR family. In terms of assembly, monomer. Interacts with the flagellar basal bodies.

Its subcellular location is the bacterial flagellum basal body. In terms of biological role, acts as a flagellar brake, regulating swimming and swarming in a bis-(3'-5') cyclic diguanylic acid (c-di-GMP)-dependent manner. Binds 1 c-di-GMP dimer per subunit. Increasing levels of c-di-GMP lead to decreased motility. The protein is Flagellar brake protein YcgR of Thiobacillus denitrificans (strain ATCC 25259 / T1).